The following is a 240-amino-acid chain: Ubiquinone biosynthesis O-methyltransferase (240 aa).

The S-adenosyl-L-methionine site is built by R44, G64, D85, and M129.

The protein belongs to the methyltransferase superfamily. UbiG/COQ3 family.

The catalysed reaction is a 3-demethylubiquinol + S-adenosyl-L-methionine = a ubiquinol + S-adenosyl-L-homocysteine + H(+). The enzyme catalyses a 3-(all-trans-polyprenyl)benzene-1,2-diol + S-adenosyl-L-methionine = a 2-methoxy-6-(all-trans-polyprenyl)phenol + S-adenosyl-L-homocysteine + H(+). It functions in the pathway cofactor biosynthesis; ubiquinone biosynthesis. In terms of biological role, O-methyltransferase that catalyzes the 2 O-methylation steps in the ubiquinone biosynthetic pathway. The chain is Ubiquinone biosynthesis O-methyltransferase from Escherichia coli O81 (strain ED1a).